A 236-amino-acid polypeptide reads, in one-letter code: Phosphoribosylaminoimidazole-succinocarboxamide synthase (236 aa).

Belongs to the SAICAR synthetase family.

The enzyme catalyses 5-amino-1-(5-phospho-D-ribosyl)imidazole-4-carboxylate + L-aspartate + ATP = (2S)-2-[5-amino-1-(5-phospho-beta-D-ribosyl)imidazole-4-carboxamido]succinate + ADP + phosphate + 2 H(+). Its pathway is purine metabolism; IMP biosynthesis via de novo pathway; 5-amino-1-(5-phospho-D-ribosyl)imidazole-4-carboxamide from 5-amino-1-(5-phospho-D-ribosyl)imidazole-4-carboxylate: step 1/2. The chain is Phosphoribosylaminoimidazole-succinocarboxamide synthase from Streptococcus equi subsp. zooepidemicus (strain H70).